We begin with the raw amino-acid sequence, 229 residues long: Dephospho-CoA kinase domain-containing protein (229 aa).

In terms of domain architecture, DPCK spans 3-207; that stretch reads LVGLTGGIAS…DCMQFLIIRA (205 aa). 8–15 contacts ATP; sequence GGIASGKS.

This sequence belongs to the CoaE family.

This Danio rerio (Zebrafish) protein is Dephospho-CoA kinase domain-containing protein (dcakd).